A 307-amino-acid polypeptide reads, in one-letter code: MSQKIKCALIGPGNIGTDLLAKLQRSPVLEPVWMVGIDPDSDGLKRAREMGIKTTAEGVDGLLPHMHVDGVQIVFDATSAYVHAENSRKVNERGALMIDLTPAAIGPFCVPPVNLIQHLGSGAMNVNMVTCGGQATIPMVAAVSRVQAVAYGEIVATVSSKSVGPGTRKNIDEFTRTTAGAVEKVGGAKKGKAIIVINPAEPPLMMRDTVHCLTEDEPDQAAITASIHQMLAEVQKYVPGYRLVNGPVFDGKRVSVFLEVEGLGDYLPKYAGNLDIMTAAAARTAEMFAEQMLAGKLTLAPVAPIAA.

C131 serves as the catalytic Acyl-thioester intermediate. Residues 162-170 and N273 contribute to the NAD(+) site; that span reads SVGPGTRKN.

It belongs to the acetaldehyde dehydrogenase family.

It carries out the reaction acetaldehyde + NAD(+) + CoA = acetyl-CoA + NADH + H(+). This is Acetaldehyde dehydrogenase 2 (aphF) from Comamonas testosteroni (Pseudomonas testosteroni).